The chain runs to 539 residues: Glucose-6-phosphate isomerase (539 aa).

Glutamate 353 acts as the Proton donor in catalysis. Active-site residues include histidine 384 and lysine 505.

The protein belongs to the GPI family.

Its subcellular location is the cytoplasm. It catalyses the reaction alpha-D-glucose 6-phosphate = beta-D-fructose 6-phosphate. It participates in carbohydrate biosynthesis; gluconeogenesis. It functions in the pathway carbohydrate degradation; glycolysis; D-glyceraldehyde 3-phosphate and glycerone phosphate from D-glucose: step 2/4. Its function is as follows. Catalyzes the reversible isomerization of glucose-6-phosphate to fructose-6-phosphate. This Ralstonia nicotianae (strain ATCC BAA-1114 / GMI1000) (Ralstonia solanacearum) protein is Glucose-6-phosphate isomerase.